The sequence spans 204 residues: Somatotropin (204 aa).

Residues 1-17 (MDRVLLLLSVLSLGVSS) form the signal peptide. The residue at position 18 (glutamine 18) is a Pyrrolidone carboxylic acid. Histidine 36 contributes to the Zn(2+) binding site. A disulfide bridge links cysteine 69 with cysteine 177. Glutamate 186 serves as a coordination point for Zn(2+). Cysteine 194 and cysteine 202 form a disulfide bridge.

This sequence belongs to the somatotropin/prolactin family.

The protein resides in the secreted. Growth hormone plays an important role in growth control and is involved in the regulation of several anabolic processes. Implicated as an osmoregulatory substance important for seawater adaptation. The polypeptide is Somatotropin (gh) (Sciaenops ocellatus (Red drum)).